The following is a 229-amino-acid chain: Zinc finger matrin-type protein 4 (229 aa).

Matrin-type zinc fingers lie at residues 14 to 44 (SYCK…KVRL), 72 to 106 (DKNK…LKLL), 145 to 175 (RYCG…NAAR), and 198 to 228 (YRCT…NLKN).

Its subcellular location is the nucleus. The protein is Zinc finger matrin-type protein 4 (Zmat4) of Mus musculus (Mouse).